Reading from the N-terminus, the 238-residue chain is 1-(5-phosphoribosyl)-5-[(5-phosphoribosylamino)methylideneamino] imidazole-4-carboxamide isomerase (238 aa).

Asp8 acts as the Proton acceptor in catalysis. The active-site Proton donor is Asp129.

The protein belongs to the HisA/HisF family.

It localises to the cytoplasm. It catalyses the reaction 1-(5-phospho-beta-D-ribosyl)-5-[(5-phospho-beta-D-ribosylamino)methylideneamino]imidazole-4-carboxamide = 5-[(5-phospho-1-deoxy-D-ribulos-1-ylimino)methylamino]-1-(5-phospho-beta-D-ribosyl)imidazole-4-carboxamide. It functions in the pathway amino-acid biosynthesis; L-histidine biosynthesis; L-histidine from 5-phospho-alpha-D-ribose 1-diphosphate: step 4/9. The sequence is that of 1-(5-phosphoribosyl)-5-[(5-phosphoribosylamino)methylideneamino] imidazole-4-carboxamide isomerase from Anaeromyxobacter sp. (strain Fw109-5).